The primary structure comprises 130 residues: Ribonuclease P protein component 2 (130 aa).

It belongs to the eukaryotic/archaeal RNase P protein component 2 family. In terms of assembly, consists of a catalytic RNA component and at least 4-5 protein subunits.

It localises to the cytoplasm. The enzyme catalyses Endonucleolytic cleavage of RNA, removing 5'-extranucleotides from tRNA precursor.. Its function is as follows. Part of ribonuclease P, a protein complex that generates mature tRNA molecules by cleaving their 5'-ends. The sequence is that of Ribonuclease P protein component 2 from Methanococcus maripaludis (strain C7 / ATCC BAA-1331).